A 342-amino-acid polypeptide reads, in one-letter code: AA9 family lytic polysaccharide monooxygenase H (342 aa).

Positions 1–19 are cleaved as a signal peptide; it reads MSKASALLAGLTGAALVAA. Cu(2+) is bound by residues histidine 20 and histidine 106. Disulfide bonds link cysteine 75–cysteine 195 and cysteine 117–cysteine 121. O2 contacts are provided by histidine 181 and glutamine 190. Position 192 (tyrosine 192) interacts with Cu(2+). Positions 263-308 are disordered; sequence ATVPGGGGANPTATTTAATSAAPSTTLRTTTTSAAQTTAPPSGDVQ. Over residues 272-305 the composition is skewed to low complexity; that stretch reads NPTATTTAATSAAPSTTLRTTTTSAAQTTAPPSG. The region spanning 306–342 is the CBM1 domain; it reads DVQTKYGQCGGNGWTGPTVCAPGSSCSVLNEWYSQCL.

This sequence belongs to the polysaccharide monooxygenase AA9 family. Cu(2+) is required as a cofactor.

Its subcellular location is the secreted. It carries out the reaction [(1-&gt;4)-beta-D-glucosyl]n+m + reduced acceptor + O2 = 4-dehydro-beta-D-glucosyl-[(1-&gt;4)-beta-D-glucosyl]n-1 + [(1-&gt;4)-beta-D-glucosyl]m + acceptor + H2O.. With respect to regulation, the presence of lignin presents a significant source of antioxidants, which probably increase the activity by trapping liberated oxidized fragments. In terms of biological role, lytic polysaccharide monooxygenase (LPMO) that depolymerizes crystalline and amorphous polysaccharides via the oxidation of scissile alpha- or beta-(1-4)-glycosidic bonds, yielding C1 or C4 oxidation products. Catalysis by LPMOs requires the reduction of the active-site copper from Cu(II) to Cu(I) by a reducing agent and H(2)O(2) or O(2) as a cosubstrate. Hydrolyzes weakly barley beta-glucan, carboxymethyl cellulose, lichenan, wheat arabinoxylan and birchwood xylan. Stimulates the hydrolysis of lignocellulosic substrates (such as hydrothermal pretreated wheat straw or steam-pretreated spruce), when combined with other cellulolytic enzymes. The protein is AA9 family lytic polysaccharide monooxygenase H of Thermothelomyces thermophilus (strain ATCC 42464 / BCRC 31852 / DSM 1799) (Sporotrichum thermophile).